The chain runs to 297 residues: uncharacterized protein (297 aa).

Disordered regions lie at residues 19-133 (NEVD…EEKE), 147-214 (AEDD…VGIA), and 226-277 (EKTS…SKEA). Over residues 41 to 52 (EEPKNEKEKHDD) the composition is skewed to basic and acidic residues. Residues 77 to 87 (PAEDDEEDEEF) show a composition bias toward acidic residues. Polar residues predominate over residues 88 to 101 (PSQSYGPSIPSNFR). 2 stretches are compositionally biased toward basic and acidic residues: residues 147–161 (AEDD…REEW) and 236–268 (IHQK…EVRG).

This is an uncharacterized protein from Caenorhabditis elegans.